A 268-amino-acid polypeptide reads, in one-letter code: Tryptophan synthase alpha chain (268 aa).

Catalysis depends on proton acceptor residues glutamate 49 and aspartate 60.

This sequence belongs to the TrpA family. In terms of assembly, tetramer of two alpha and two beta chains.

The enzyme catalyses (1S,2R)-1-C-(indol-3-yl)glycerol 3-phosphate + L-serine = D-glyceraldehyde 3-phosphate + L-tryptophan + H2O. The protein operates within amino-acid biosynthesis; L-tryptophan biosynthesis; L-tryptophan from chorismate: step 5/5. The alpha subunit is responsible for the aldol cleavage of indoleglycerol phosphate to indole and glyceraldehyde 3-phosphate. This chain is Tryptophan synthase alpha chain, found in Shigella boydii serotype 4 (strain Sb227).